Here is a 307-residue protein sequence, read N- to C-terminus: Histone deacetylase HDT1 (307 aa).

Residues glutamate 98 to leucine 112 show a composition bias toward acidic residues. Residues glutamate 98–proline 280 form a disordered region. Residues glutamate 119 to glutamate 132 are compositionally biased toward basic and acidic residues. Acidic residues predominate over residues aspartate 151 to threonine 197. The segment covering proline 198 to alanine 211 has biased composition (basic and acidic residues). Over residues serine 265–proline 277 the composition is skewed to low complexity. The C2H2-type; degenerate zinc-finger motif lies at valine 276 to methionine 299.

The protein belongs to the histone deacetylase HD2 family. Multimer. Isolated as a trimer composed of 3 proteins of 39, 42 and 45 kDa, possibly a homotrimer with different phosphorylation status or a heterotrimer with HDT2 and/or HDT3. In terms of processing, the N-terminus is blocked. Phosphorylated. Required for enzyme activity.

It localises to the nucleus. It is found in the nucleolus. Its activity is regulated as follows. Inhibited by 3-(4-Aroyl-1-methyl-1H-pyrrol-2-yl)-N-hydroxy-2-propenamides. 3-(1-methyl-4-phenylacetyl-1H-pyrrol-2-yl)-N-hydroxy-2-propenamide 1b and 3-[1-methyl-4-(3-phenyl-2-propenoyl)-1H-pyrrol-2-yl]-N-hydroxy-2-propenamide 1c are very potent inhibitors. Its function is as follows. Mediates the deacetylation of lysine residues on the N-terminal part of the core histones (H2A, H2B, H3 and H4). Histone deacetylation gives a tag for epigenetic repression and plays an important role in transcriptional regulation, cell cycle progression and developmental events. Able to deacetylate all 4 core histones. This is Histone deacetylase HDT1 (HDT1) from Zea mays (Maize).